The sequence spans 125 residues: Putative glutaredoxin-C2 (125 aa).

The Glutaredoxin domain occupies 2–103 (AERVARLSSQ…PLLREAGALW (102 aa)). Cysteines 22 and 25 form a disulfide.

Belongs to the glutaredoxin family. CC-type subfamily.

Its subcellular location is the cytoplasm. Its function is as follows. Has a glutathione-disulfide oxidoreductase activity in the presence of NADPH and glutathione reductase. Reduces low molecular weight disulfides and proteins. The chain is Putative glutaredoxin-C2 (GRXC2) from Oryza sativa subsp. japonica (Rice).